Reading from the N-terminus, the 100-residue chain is Enhancer of yellow 2 transcription factor (100 aa).

It belongs to the ENY2 family. Component of the nuclear pore complex (NPC)-associated AMEX complex (anchoring and mRNA export complex), composed of at least e(y)2 and xmas-2. Component of the SAGA transcription coactivator-HAT complexes, at least composed of Ada2b, e(y)2, Pcaf/Gcn5, Taf10 and Nipped-A/Trrap. Within the SAGA complex, e(y)2, Sgf11, and not/nonstop form an additional subcomplex of SAGA called the DUB module (deubiquitination module). Component of the THO complex, composed of at least e(y)2, HPR1, THO2, THOC5, THOC6 and THOC7. Interacts with e(y)1. Interacts with su(Hw) (via zinc fingers). Interacts with xmas-2; required for localization to the nuclear periphery. Interacts with the nuclear pore complex (NPC).

The protein resides in the nucleus. It is found in the nucleoplasm. Its subcellular location is the cytoplasm. Involved in mRNA export coupled transcription activation by association with both the AMEX and the SAGA complexes. The SAGA complex is a multiprotein complex that activates transcription by remodeling chromatin and mediating histone acetylation and deubiquitination. Within the SAGA complex, participates in a subcomplex that specifically deubiquitinates histone H2B. The SAGA complex is recruited to specific gene promoters by activators, where it is required for transcription. Required for nuclear receptor-mediated transactivation. Involved in transcription elongation by recruiting the THO complex onto nascent mRNA. The AMEX complex functions in docking export-competent ribonucleoprotein particles (mRNPs) to the nuclear entrance of the nuclear pore complex (nuclear basket). AMEX participates in mRNA export and accurate chromatin positioning in the nucleus by tethering genes to the nuclear periphery. The polypeptide is Enhancer of yellow 2 transcription factor (Drosophila pseudoobscura pseudoobscura (Fruit fly)).